The chain runs to 906 residues: Protein translocase subunit SecA (906 aa).

ATP contacts are provided by residues glutamine 87, 105-109, and aspartate 513; that span reads GEGKT. Residues 860–906 are disordered; that stretch reads QVNKGEVVSDENTGDDTFVRNEKKVGRNEPCPCGSGKKYKQCHGKLD. The segment covering 876 to 886 has biased composition (basic and acidic residues); it reads TFVRNEKKVGR. Residues cysteine 890, cysteine 892, cysteine 901, and histidine 902 each coordinate Zn(2+). A compositionally biased stretch (basic residues) spans 896–906; the sequence is KKYKQCHGKLD.

This sequence belongs to the SecA family. Monomer and homodimer. Part of the essential Sec protein translocation apparatus which comprises SecA, SecYEG and auxiliary proteins SecDF-YajC and YidC. The cofactor is Zn(2+).

It is found in the cell inner membrane. It localises to the cytoplasm. It catalyses the reaction ATP + H2O + cellular proteinSide 1 = ADP + phosphate + cellular proteinSide 2.. In terms of biological role, part of the Sec protein translocase complex. Interacts with the SecYEG preprotein conducting channel. Has a central role in coupling the hydrolysis of ATP to the transfer of proteins into and across the cell membrane, serving both as a receptor for the preprotein-SecB complex and as an ATP-driven molecular motor driving the stepwise translocation of polypeptide chains across the membrane. In Psychromonas ingrahamii (strain DSM 17664 / CCUG 51855 / 37), this protein is Protein translocase subunit SecA.